The following is a 186-amino-acid chain: Peptidyl-tRNA hydrolase (186 aa).

TRNA is bound at residue Tyr14. His19 serves as the catalytic Proton acceptor. Residues Tyr64, Asn66, and Asn112 each contribute to the tRNA site.

This sequence belongs to the PTH family. As to quaternary structure, monomer.

The protein resides in the cytoplasm. The enzyme catalyses an N-acyl-L-alpha-aminoacyl-tRNA + H2O = an N-acyl-L-amino acid + a tRNA + H(+). Its function is as follows. Hydrolyzes ribosome-free peptidyl-tRNAs (with 1 or more amino acids incorporated), which drop off the ribosome during protein synthesis, or as a result of ribosome stalling. Functionally, catalyzes the release of premature peptidyl moieties from peptidyl-tRNA molecules trapped in stalled 50S ribosomal subunits, and thus maintains levels of free tRNAs and 50S ribosomes. The protein is Peptidyl-tRNA hydrolase of Bacillus cereus (strain ATCC 10987 / NRS 248).